The chain runs to 658 residues: tRNA uridine 5-carboxymethylaminomethyl modification enzyme MnmG (658 aa).

13–18 (GAGHAG) serves as a coordination point for FAD. NAD(+) is bound at residue 285 to 299 (GPRYCPSVEDKINRF).

The protein belongs to the MnmG family. Homodimer. Heterotetramer of two MnmE and two MnmG subunits. The cofactor is FAD.

It localises to the cytoplasm. NAD-binding protein involved in the addition of a carboxymethylaminomethyl (cmnm) group at the wobble position (U34) of certain tRNAs, forming tRNA-cmnm(5)s(2)U34. This is tRNA uridine 5-carboxymethylaminomethyl modification enzyme MnmG from Verminephrobacter eiseniae (strain EF01-2).